Consider the following 319-residue polypeptide: Proline hydroxylase buaE (319 aa).

In terms of domain architecture, Fe2OG dioxygenase spans 168-280 (NSSELRLNHY…RYSIAYFGKP (113 aa)). The Fe cation site is built by H195, D197, and H255. 2-oxoglutarate is bound at residue R271.

This sequence belongs to the iron/ascorbate-dependent oxidoreductase family. Requires Fe(2+) as cofactor.

Its pathway is mycotoxin biosynthesis. Proline hydroxylase; part of the gene cluster that mediates the biosynthesis of burnettramic acids, an unusual class of bolaamphiphilic pyrrolizidinediones that display potent antibacterial, antifungal, and cytotoxic activities. The first step of the biosynthesis of burnettramic acids is the hydroxylation of proline by the proline hydroxylase buaE to generate 4-hydroxyproline. The PKS-NRPS buaA and trans-enoyl reductase buaC construct the highly reduced polyketide chain, and the condensation (C) domain of buaA then catalyzes the amide bond formation with the activated 4-hydroxyproline. This is followed by the R domain releasing the nascent polyketide-peptide directly via a Dieckmann condensation to afford a tetramic acid fused to the hydroxyproline, generating the bicyclic pyrrolidinedione moiety. The cytochrome P450 monooxygenases buaD and buaG are likely responsible for the multiple hydroxylations on the polyketide chain and its terminus, although in the heterologous context, buaD does not appear to be required. Therefore, while buaG may be a multifunctional cytochrome P450 monooxygenase, it cannot be ruled out that the two secondary alcohols on the polyketide chain could have an acetate origin. Finally, the glycosyltransferase buaB transfers beta-D-mannose to the aglycone burnettramic acid A to form burnettramic acid A. Burnettramic acid B is a minor cis-pyrrolizidine epimer of burnettramic acid A and it is likely that small amounts of it form naturally in acidic environments. In Petromyces alliaceus (Aspergillus alliaceus), this protein is Proline hydroxylase buaE.